Here is a 278-residue protein sequence, read N- to C-terminus: MFPFSGCWRTELLLLLLLAVAVRESWQIEEKSCDLVGEKDKESKNEVALLERLRPLFNKSFESTVGQGSDTYSYIFRVCREASNHSSGAGLVQINKSNDKETVVGRINETHIFNGSNWIMLIYKGGDEYDNHCGKEQRRAVVMISCNRHTLAANFNPVSEERGKVQDCFYLFEMDSSLACSPEVSHLSVGSILLVIFASLVAVYIIGGFLYQRLVVGAKGMEQFPHLAFWQDLGNLVADGCDFVCRSKPRNVPAAYRGVGDDQLGEESEERDDHLLPM.

An N-terminal signal peptide occupies residues Met1 to Ala21. The Lumenal portion of the chain corresponds to Val22 to His186. In terms of domain architecture, MRH spans Lys31–Pro182. The cysteines at positions 33 and 79 are disulfide-linked. N-linked (GlcNAc...) asparagine glycosylation is found at Asn58, Asn84, Asn95, Asn108, and Asn114. 2 disulfide bridges follow: Cys133–Cys168 and Cys146–Cys180. Residues Leu187–Tyr211 form a helical membrane-spanning segment. Topologically, residues Gln212–Met278 are cytoplasmic. Positions Arg257 to Met278 are disordered. Ser268 is subject to Phosphoserine.

In terms of assembly, homodimer. Binds GGA1, GGA2 and GGA3.

The protein resides in the lysosome membrane. Its function is as follows. Transport of phosphorylated lysosomal enzymes from the Golgi complex and the cell surface to lysosomes. Lysosomal enzymes bearing phosphomannosyl residues bind specifically to mannose-6-phosphate receptors in the Golgi apparatus and the resulting receptor-ligand complex is transported to an acidic prelyosomal compartment where the low pH mediates the dissociation of the complex. The protein is Cation-dependent mannose-6-phosphate receptor (M6pr) of Mus musculus (Mouse).